A 1183-amino-acid polypeptide reads, in one-letter code: DNA-directed RNA polymerase subunit beta (1183 aa).

The protein belongs to the RNA polymerase beta chain family. The RNAP catalytic core consists of 2 alpha, 1 beta, 1 beta' and 1 omega subunit. When a sigma factor is associated with the core the holoenzyme is formed, which can initiate transcription.

The enzyme catalyses RNA(n) + a ribonucleoside 5'-triphosphate = RNA(n+1) + diphosphate. Its function is as follows. DNA-dependent RNA polymerase catalyzes the transcription of DNA into RNA using the four ribonucleoside triphosphates as substrates. The polypeptide is DNA-directed RNA polymerase subunit beta (Staphylococcus aureus (strain MRSA252)).